Here is a 568-residue protein sequence, read N- to C-terminus: Glucose-6-phosphate isomerase, cytosolic (568 aa).

Glu-360 (proton donor) is an active-site residue. Catalysis depends on residues His-391 and Lys-516.

It belongs to the GPI family. In terms of assembly, homodimer.

The protein localises to the cytoplasm. The enzyme catalyses alpha-D-glucose 6-phosphate = beta-D-fructose 6-phosphate. It functions in the pathway carbohydrate degradation; glycolysis; D-glyceraldehyde 3-phosphate and glycerone phosphate from D-glucose: step 2/4. This is Glucose-6-phosphate isomerase, cytosolic (PGIC) from Oenothera sinuata var. hirsuta (Mexican evening primrose).